The primary structure comprises 867 residues: Coiled-coil domain-containing protein 80 (867 aa).

A signal peptide spans 1–18 (MRARYMLGFGVLCLLTWA). Disordered regions lie at residues 83–121 (RKVL…SSAG) and 282–539 (DSQV…GTLA). The segment covering 95-104 (GTRNPIQQDD) has biased composition (polar residues). The span at 288-297 (PTERRKEIRK) shows a compositional bias: basic and acidic residues. Positions 301–370 (RPTTTTTPAP…PRTTRANTTP (70 aa)) are enriched in low complexity. Over residues 401 to 412 (ARYRDNHTSKKE) the composition is skewed to basic and acidic residues. The segment covering 426–435 (KPTKVRPTKK) has biased composition (basic residues). Residues 436–451 (KNGDKDISNAYEEKYD) show a composition bias toward basic and acidic residues. A compositionally biased stretch (basic residues) spans 471 to 483 (KRGKGKTDKKKKK). 2 stretches are compositionally biased toward basic and acidic residues: residues 484–504 (DKTD…DGKG) and 514–523 (KILEKEDYQK).

The protein belongs to the CCDC80 family. Binds to various extracellular matrix proteins.

Its subcellular location is the secreted. The protein localises to the extracellular space. It localises to the extracellular matrix. Functionally, promotes cell adhesion and matrix assembly. In Danio rerio (Zebrafish), this protein is Coiled-coil domain-containing protein 80 (ccdc80).